The following is a 309-amino-acid chain: Wall-associated proteinase (309 aa).

Asn190 and Asn295 each carry an N-linked (GlcNAc...) asparagine glycan.

It is found in the secreted. The protein resides in the cell wall. Its subcellular location is the membrane. Functionally, may participate in wall plasticization and/or intussusception or in cell wall turnover. This chain is Wall-associated proteinase, found in Coccidioides posadasii (strain RMSCC 757 / Silveira) (Valley fever fungus).